The following is a 517-amino-acid chain: GMP synthase [glutamine-hydrolyzing] (517 aa).

The Glutamine amidotransferase type-1 domain occupies 9–199 (RILILDFGSQ…VLNVCGCEGL (191 aa)). Cys86 acts as the Nucleophile in catalysis. Residues His173 and Glu175 contribute to the active site. A GMPS ATP-PPase domain is found at 200 to 392 (WTSASIIEDA…LGLPYNMLYR (193 aa)). 227 to 233 (SGGVDSS) serves as a coordination point for ATP.

Homodimer.

It catalyses the reaction XMP + L-glutamine + ATP + H2O = GMP + L-glutamate + AMP + diphosphate + 2 H(+). It participates in purine metabolism; GMP biosynthesis; GMP from XMP (L-Gln route): step 1/1. Catalyzes the synthesis of GMP from XMP. In Aliivibrio fischeri (strain ATCC 700601 / ES114) (Vibrio fischeri), this protein is GMP synthase [glutamine-hydrolyzing].